Reading from the N-terminus, the 214-residue chain is Cytochrome c biogenesis ATP-binding export protein CcmA (214 aa).

The region spanning 12-214 (LAARALAFSR…TRMLTLEAAA (203 aa)) is the ABC transporter domain. 44–51 (GDNGAGKT) contributes to the ATP binding site.

This sequence belongs to the ABC transporter superfamily. CcmA exporter (TC 3.A.1.107) family. As to quaternary structure, the complex is composed of two ATP-binding proteins (CcmA) and two transmembrane proteins (CcmB).

The protein resides in the cell inner membrane. It carries out the reaction heme b(in) + ATP + H2O = heme b(out) + ADP + phosphate + H(+). Functionally, part of the ABC transporter complex CcmAB involved in the biogenesis of c-type cytochromes; once thought to export heme, this seems not to be the case, but its exact role is uncertain. Responsible for energy coupling to the transport system. This is Cytochrome c biogenesis ATP-binding export protein CcmA from Xanthomonas campestris pv. campestris (strain 8004).